A 141-amino-acid chain; its full sequence is Nucleoside diphosphate kinase (141 aa).

Residues lysine 11, phenylalanine 59, arginine 87, threonine 93, arginine 104, and asparagine 114 each contribute to the ATP site. Histidine 117 serves as the catalytic Pros-phosphohistidine intermediate.

It belongs to the NDK family. As to quaternary structure, homotetramer. It depends on Mg(2+) as a cofactor.

It is found in the cytoplasm. The catalysed reaction is a 2'-deoxyribonucleoside 5'-diphosphate + ATP = a 2'-deoxyribonucleoside 5'-triphosphate + ADP. The enzyme catalyses a ribonucleoside 5'-diphosphate + ATP = a ribonucleoside 5'-triphosphate + ADP. In terms of biological role, major role in the synthesis of nucleoside triphosphates other than ATP. The ATP gamma phosphate is transferred to the NDP beta phosphate via a ping-pong mechanism, using a phosphorylated active-site intermediate. This is Nucleoside diphosphate kinase from Haemophilus influenzae (strain ATCC 51907 / DSM 11121 / KW20 / Rd).